Here is a 429-residue protein sequence, read N- to C-terminus: Glycogenin-1 (429 aa).

UDP is bound by residues L8, T10, N11, Y14, and R76. Residues L8, T10, N11, Y14, R76, K85, D101, A102, D103, N132, S133, D159, D162, and Q163 each contribute to the UDP-alpha-D-glucose site. Positions 101, 102, and 103 each coordinate UDP. D101 contributes to the Mn(2+) binding site. D103 is a binding site for Mn(2+). Y194 is a glycosylation site (O-linked (Glc...) tyrosine). Residues H211, G214, and K217 each coordinate UDP. H211 serves as a coordination point for Mn(2+). Residues G214 and K217 each contribute to the UDP-alpha-D-glucose site. Disordered stretches follow at residues 254-274 and 300-338; these read VFPSHHHTPEHRSHSADHPKI and SYDTDANTSDSHRNNEPHKHDQQREEHHELPHNKFQTPH. Composition is skewed to basic and acidic residues over residues 263–274 and 309–338; these read EHRSHSADHPKI and DSHRNNEPHKHDQQREEHHELPHNKFQTPH.

Belongs to the glycosyltransferase 8 family. Glycogenin subfamily. In terms of assembly, forms a heterooctamer with one molecule of gyg-1 bound to each protomer of the gys-1 homotetramer. The N-terminus of gys-1 is involved in interprotomer contacts with gyg-1. The interaction with gys-1 is required for glycogen production but is not required for gys-1 intrinsic activity. Requires Mn(2+) as cofactor. In terms of processing, self-glycosylated by the transfer of glucose residues from UDP-glucose to itself, forming an alpha-1,4-glycan of around 10 residues attached to Tyr-194.

It localises to the cytoplasm. The protein resides in the nucleus. The catalysed reaction is L-tyrosyl-[glycogenin] + UDP-alpha-D-glucose = alpha-D-glucosyl-L-tyrosyl-[glycogenin] + UDP + H(+). It carries out the reaction [1,4-alpha-D-glucosyl](n)-L-tyrosyl-[glycogenin] + UDP-alpha-D-glucose = [1,4-alpha-D-glucosyl](n+1)-L-tyrosyl-[glycogenin] + UDP + H(+). The protein operates within glycan biosynthesis; glycogen biosynthesis. Self-glucosylating initiator of glycogen synthesis. It catalyzes the formation of a short alpha (1,4)-glucosyl chain covalently attached via a glucose 1-O-tyrosyl linkage to internal tyrosine residues and these chains act as primers for the elongation reaction catalyzed by glycogen synthase. This chain is Glycogenin-1, found in Caenorhabditis elegans.